The chain runs to 328 residues: Alanine racemase (328 aa).

The Proton acceptor; specific for D-alanine role is filled by K33. K33 carries the N6-(pyridoxal phosphate)lysine modification. Residue R118 coordinates substrate. The active-site Proton acceptor; specific for L-alanine is Y237. Substrate is bound at residue M283.

It belongs to the alanine racemase family. It depends on pyridoxal 5'-phosphate as a cofactor.

It catalyses the reaction L-alanine = D-alanine. Its pathway is amino-acid biosynthesis; D-alanine biosynthesis; D-alanine from L-alanine: step 1/1. Its function is as follows. Catalyzes the interconversion of L-alanine and D-alanine. May also act on other amino acids. This chain is Alanine racemase (alr), found in Campylobacter jejuni subsp. jejuni serotype O:2 (strain ATCC 700819 / NCTC 11168).